The sequence spans 343 residues: MQFIDHATICVKAGDGGDGIVAFRREKYVPAGGPSGGNGGRGGSVILVATEQLQTLLDFRYLRLFKAQDGERGGPKGMTGASADDLIIQVPCGTAVYDAETDECLGDLTSAGQTLQVAQGGKGGLGNQHFLSNSNRAPEHALPGLPGEERQLRLELKLLAEVGLIGLPNAGKSMLISVLSAAKPKIADYPFTTLVPNLGVVRRETGDGTVFADIPGLIEGAHRGAGLGHDFLRHIERTRLLIHLVDLTAEDPIADWRTIQAELKAYGRGLSDRPQILALNKIDAVLDEDLSFWQAEFQALTPVPLLCISSADRRGLDALLRLVWQWLDELDAAAELSETRVLN.

The 159-residue stretch at 1–159 folds into the Obg domain; it reads MQFIDHATIC…RQLRLELKLL (159 aa). The OBG-type G domain occupies 160 to 328; the sequence is AEVGLIGLPN…LLRLVWQWLD (169 aa). GTP is bound by residues 166–173, 191–195, 213–216, 280–283, and 309–311; these read GLPNAGKS, FTTLV, DIPG, NKID, and SSA. 2 residues coordinate Mg(2+): Ser173 and Thr193.

Belongs to the TRAFAC class OBG-HflX-like GTPase superfamily. OBG GTPase family. In terms of assembly, monomer. Requires Mg(2+) as cofactor.

It localises to the cytoplasm. Its function is as follows. An essential GTPase which binds GTP, GDP and possibly (p)ppGpp with moderate affinity, with high nucleotide exchange rates and a fairly low GTP hydrolysis rate. Plays a role in control of the cell cycle, stress response, ribosome biogenesis and in those bacteria that undergo differentiation, in morphogenesis control. In Synechococcus elongatus (strain ATCC 33912 / PCC 7942 / FACHB-805) (Anacystis nidulans R2), this protein is GTPase Obg.